Consider the following 305-residue polypeptide: 4-diphosphocytidyl-2-C-methyl-D-erythritol kinase (305 aa).

K18 is an active-site residue. Residue 103–113 (PYGAGLGGGSS) participates in ATP binding. The active site involves D145.

It belongs to the GHMP kinase family. IspE subfamily.

It carries out the reaction 4-CDP-2-C-methyl-D-erythritol + ATP = 4-CDP-2-C-methyl-D-erythritol 2-phosphate + ADP + H(+). It participates in isoprenoid biosynthesis; isopentenyl diphosphate biosynthesis via DXP pathway; isopentenyl diphosphate from 1-deoxy-D-xylulose 5-phosphate: step 3/6. Its function is as follows. Catalyzes the phosphorylation of the position 2 hydroxy group of 4-diphosphocytidyl-2C-methyl-D-erythritol. The sequence is that of 4-diphosphocytidyl-2-C-methyl-D-erythritol kinase from Lawsonia intracellularis (strain PHE/MN1-00).